The chain runs to 277 residues: Diaminopimelate epimerase (277 aa).

2 residues coordinate substrate: N11 and N72. C81 functions as the Proton donor in the catalytic mechanism. Residues 82-83 (GN), N189, and 207-208 (ER) each bind substrate. C217 serves as the catalytic Proton acceptor. Substrate is bound at residue 218-219 (GT).

It belongs to the diaminopimelate epimerase family. In terms of assembly, homodimer.

The protein resides in the cytoplasm. The enzyme catalyses (2S,6S)-2,6-diaminopimelate = meso-2,6-diaminopimelate. The protein operates within amino-acid biosynthesis; L-lysine biosynthesis via DAP pathway; DL-2,6-diaminopimelate from LL-2,6-diaminopimelate: step 1/1. In terms of biological role, catalyzes the stereoinversion of LL-2,6-diaminopimelate (L,L-DAP) to meso-diaminopimelate (meso-DAP), a precursor of L-lysine and an essential component of the bacterial peptidoglycan. This chain is Diaminopimelate epimerase, found in Hydrogenobaculum sp. (strain Y04AAS1).